Consider the following 439-residue polypeptide: L-cysteine:1D-myo-inositol 2-amino-2-deoxy-alpha-D-glucopyranoside ligase 2 (439 aa).

Cysteine 60 contributes to the Zn(2+) binding site. L-cysteinyl-5'-AMP-binding positions include 60-63 (CGIT), threonine 75, and 98-100 (NVT). The 'HIGH' region signature appears at 62–72 (ITPYDSTHLGH). The short motif at 203 to 208 (ERGGDP) is the 'ERGGDP' region element. Residue tryptophan 243 participates in L-cysteinyl-5'-AMP binding. Cysteine 247 is a binding site for Zn(2+). 265–267 (GVD) serves as a coordination point for L-cysteinyl-5'-AMP. Residue histidine 272 participates in Zn(2+) binding. Residue isoleucine 299 coordinates L-cysteinyl-5'-AMP. Residues 305–309 (KMSKS) carry the 'KMSKS' region motif.

It belongs to the class-I aminoacyl-tRNA synthetase family. MshC subfamily. In terms of assembly, monomer. Zn(2+) serves as cofactor.

The enzyme catalyses 1D-myo-inositol 2-amino-2-deoxy-alpha-D-glucopyranoside + L-cysteine + ATP = 1D-myo-inositol 2-(L-cysteinylamino)-2-deoxy-alpha-D-glucopyranoside + AMP + diphosphate + H(+). Functionally, catalyzes the ATP-dependent condensation of GlcN-Ins and L-cysteine to form L-Cys-GlcN-Ins. This Corynebacterium urealyticum (strain ATCC 43042 / DSM 7109) protein is L-cysteine:1D-myo-inositol 2-amino-2-deoxy-alpha-D-glucopyranoside ligase 2.